Reading from the N-terminus, the 209-residue chain is Orotate phosphoribosyltransferase (209 aa).

Residues Arg-96, Lys-100, His-102, and 122-130 contribute to the 5-phospho-alpha-D-ribose 1-diphosphate site; that span reads EDLISTGGS. Ser-126 serves as a coordination point for orotate.

Belongs to the purine/pyrimidine phosphoribosyltransferase family. PyrE subfamily. As to quaternary structure, homodimer. It depends on Mg(2+) as a cofactor.

The catalysed reaction is orotidine 5'-phosphate + diphosphate = orotate + 5-phospho-alpha-D-ribose 1-diphosphate. The protein operates within pyrimidine metabolism; UMP biosynthesis via de novo pathway; UMP from orotate: step 1/2. Functionally, catalyzes the transfer of a ribosyl phosphate group from 5-phosphoribose 1-diphosphate to orotate, leading to the formation of orotidine monophosphate (OMP). The protein is Orotate phosphoribosyltransferase of Streptococcus pyogenes serotype M3 (strain ATCC BAA-595 / MGAS315).